Consider the following 483-residue polypeptide: Cobyric acid synthase (483 aa).

Positions 244-430 constitute a GATase cobBQ-type domain; that stretch reads WLRVIAPVLP…LHGLFDHAEA (187 aa). Cysteine 325 functions as the Nucleophile in the catalytic mechanism. Histidine 422 is a catalytic residue.

It belongs to the CobB/CobQ family. CobQ subfamily.

The protein operates within cofactor biosynthesis; adenosylcobalamin biosynthesis. Functionally, catalyzes amidations at positions B, D, E, and G on adenosylcobyrinic A,C-diamide. NH(2) groups are provided by glutamine, and one molecule of ATP is hydrogenolyzed for each amidation. The chain is Cobyric acid synthase from Methylobacillus flagellatus (strain ATCC 51484 / DSM 6875 / VKM B-1610 / KT).